Reading from the N-terminus, the 94-residue chain is DNA-directed RNA polymerase subunit omega (94 aa).

This sequence belongs to the RNA polymerase subunit omega family. The RNAP catalytic core consists of 2 alpha, 1 beta, 1 beta' and 1 omega subunit. When a sigma factor is associated with the core the holoenzyme is formed, which can initiate transcription.

The enzyme catalyses RNA(n) + a ribonucleoside 5'-triphosphate = RNA(n+1) + diphosphate. Promotes RNA polymerase assembly. Latches the N- and C-terminal regions of the beta' subunit thereby facilitating its interaction with the beta and alpha subunits. The protein is DNA-directed RNA polymerase subunit omega of Bifidobacterium animalis subsp. lactis (strain AD011).